Reading from the N-terminus, the 456-residue chain is tRNA (guanine(37)-N(1))-methyltransferase (456 aa).

S-adenosyl-L-methionine contacts are provided by residues His-246, 284–285, 310–311, and Asn-336; these read DL and DG.

The protein belongs to the class I-like SAM-binding methyltransferase superfamily. TRM5/TYW2 family. As to quaternary structure, monomer.

The protein localises to the mitochondrion matrix. The protein resides in the nucleus. It localises to the cytoplasm. The enzyme catalyses guanosine(37) in tRNA + S-adenosyl-L-methionine = N(1)-methylguanosine(37) in tRNA + S-adenosyl-L-homocysteine + H(+). Functionally, specifically methylates the N1 position of guanosine-37 in various cytoplasmic and mitochondrial tRNAs. Methylation is not dependent on the nature of the nucleoside 5' of the target nucleoside. This is the first step in the biosynthesis of wybutosine (yW), a modified base adjacent to the anticodon of tRNAs and required for accurate decoding. This Ciona intestinalis (Transparent sea squirt) protein is tRNA (guanine(37)-N(1))-methyltransferase.